The following is a 183-amino-acid chain: ATP synthase subunit b, chloroplastic (183 aa).

The helical transmembrane segment at 28–48 threads the bilayer; the sequence is DIFEANVINILLLLFGLIYVL.

It belongs to the ATPase B chain family. F-type ATPases have 2 components, F(1) - the catalytic core - and F(0) - the membrane proton channel. F(1) has five subunits: alpha(3), beta(3), gamma(1), delta(1), epsilon(1). F(0) has four main subunits: a(1), b(1), b'(1) and c(10-14). The alpha and beta chains form an alternating ring which encloses part of the gamma chain. F(1) is attached to F(0) by a central stalk formed by the gamma and epsilon chains, while a peripheral stalk is formed by the delta, b and b' chains.

The protein resides in the plastid. It localises to the chloroplast thylakoid membrane. Functionally, f(1)F(0) ATP synthase produces ATP from ADP in the presence of a proton or sodium gradient. F-type ATPases consist of two structural domains, F(1) containing the extramembraneous catalytic core and F(0) containing the membrane proton channel, linked together by a central stalk and a peripheral stalk. During catalysis, ATP synthesis in the catalytic domain of F(1) is coupled via a rotary mechanism of the central stalk subunits to proton translocation. Its function is as follows. Component of the F(0) channel, it forms part of the peripheral stalk, linking F(1) to F(0). In Porphyra purpurea (Red seaweed), this protein is ATP synthase subunit b, chloroplastic.